The primary structure comprises 88 residues: Snakin-1 (88 aa).

The first 25 residues, 1–25 (MKLFLLTLLLVTLVITPSLIQTTMA), serve as a signal peptide directing secretion.

This sequence belongs to the GASA family. Six disulfide bonds may be present. As to expression, expressed in tubers, stems, axillary and young floral buds, sepals, petals, stamens and carpels, but not in roots, stolons, shoot apex meristem or young leaves.

Its subcellular location is the secreted. The protein resides in the cell wall. In terms of biological role, has an antimicrobial activity. Causes a rapid aggregation of both Gram-positive and Gram-negative bacteria, but the antimicrobial activity is not correlated with the capacity to aggregate bacteria. In Solanum tuberosum (Potato), this protein is Snakin-1 (SN1).